Here is a 396-residue protein sequence, read N- to C-terminus: Elongation factor Tu (396 aa).

In terms of domain architecture, tr-type G spans 10–206 (KPHVNVGTIG…TMDSYIPEPV (197 aa)). Residues 19 to 26 (GHVDHGKT) are G1. 19–26 (GHVDHGKT) serves as a coordination point for GTP. T26 provides a ligand contact to Mg(2+). A G2 region spans residues 60-64 (GITIS). Residues 81-84 (DCPG) form a G3 region. GTP is bound by residues 81–85 (DCPGH) and 136–139 (NKAD). Residues 136–139 (NKAD) form a G4 region. Residues 174 to 176 (SAL) are G5.

This sequence belongs to the TRAFAC class translation factor GTPase superfamily. Classic translation factor GTPase family. EF-Tu/EF-1A subfamily. As to quaternary structure, monomer.

The protein resides in the cytoplasm. The catalysed reaction is GTP + H2O = GDP + phosphate + H(+). Functionally, GTP hydrolase that promotes the GTP-dependent binding of aminoacyl-tRNA to the A-site of ribosomes during protein biosynthesis. This Legionella pneumophila (strain Paris) protein is Elongation factor Tu.